A 344-amino-acid chain; its full sequence is Heat-inducible transcription repressor HrcA (344 aa).

This sequence belongs to the HrcA family.

In terms of biological role, negative regulator of class I heat shock genes (grpE-dnaK-dnaJ and groELS operons). Prevents heat-shock induction of these operons. The protein is Heat-inducible transcription repressor HrcA of Streptococcus equi subsp. equi (strain 4047).